Consider the following 898-residue polypeptide: Serine/threonine-protein kinase TAO3 (898 aa).

One can recognise a Protein kinase domain in the interval 24–277 (FIDLHEIGHG…AAELLRHDFI (254 aa)). ATP-binding positions include 30–38 (IGHGSFGAV) and Lys-53. Asp-147 functions as the Proton acceptor in the catalytic mechanism. Disordered stretches follow at residues 316–372 (TRNG…EVMD) and 405–424 (DEAG…SVQS). 5 positions are modified to phosphoserine: Ser-324, Ser-331, Ser-343, Ser-346, and Ser-349. A compositionally biased stretch (low complexity) spans 349–366 (SIPSVSVSTGSRSSSVNS). The residue at position 357 (Thr-357) is a Phosphothreonine. Position 359 is a phosphoserine (Ser-359). The segment covering 405–416 (DEAGHGDPRPEP) has biased composition (basic and acidic residues). At Ser-442 the chain carries Phosphoserine. 3 coiled-coil regions span residues 452–502 (EQEN…THAN), 548–649 (FLES…HAML), and 753–871 (ILKT…QERE). A disordered region spans residues 565–596 (EEMNEDHSTPKKEKQERISKHKENLQHTQAEE). At Lys-830 the chain carries N6-acetyllysine.

Belongs to the protein kinase superfamily. STE Ser/Thr protein kinase family. STE20 subfamily. Self-associates. Interacts with ERN1 and TRAF2. Interaction with TRAF2 is facilitated under ER stress conditions, such as treatment with tunicamycin, and may promote TRAF2 phosphorylation. Interacts (via N-terminus) with STK25; the interaction promotes STK25 abundance at the level of protein expression and/or stability. Autophosphorylated. Phosphorylation at Ser-324 by ATM following DNA damage is required for activation of the p38/MAPK14 stress-activated MAPK cascade. Phosphorylated at Ser-324 and on Tyr residues during T cell activation. Phosphorylated by LRRK2. Ubiquitously expressed, with a higher expression in the retina.

It localises to the cytoplasm. Its subcellular location is the cell membrane. The protein resides in the membrane raft. The protein localises to the lipid droplet. It catalyses the reaction L-seryl-[protein] + ATP = O-phospho-L-seryl-[protein] + ADP + H(+). The catalysed reaction is L-threonyl-[protein] + ATP = O-phospho-L-threonyl-[protein] + ADP + H(+). Its function is as follows. Serine/threonine-protein kinase that acts as a regulator of the p38/MAPK14 stress-activated MAPK cascade and of the MAPK8/JNK cascade. In response to DNA damage, involved in the G2/M transition DNA damage checkpoint by activating the p38/MAPK14 stress-activated MAPK cascade, probably by mediating phosphorylation of upstream MAP2K3 and MAP2K6 kinases. Inhibits basal activity of the MAPK8/JNK cascade and diminishes its activation in response to epidermal growth factor (EGF). Positively regulates canonical T cell receptor (TCR) signaling by preventing early PTPN6/SHP1-mediated inactivation of LCK, ensuring sustained TCR signaling that is required for optimal activation and differentiation of T cells. Phosphorylates PTPN6/SHP1 on 'Thr-396', leading to its polyubiquitination and subsequent proteasomal degradation. Required for cell surface expression of metalloprotease ADAM10 on type 1 transitional B cells which is necessary for their NOTCH-mediated development into marginal zone B cells. Also required for the NOTCH-mediated terminal differentiation of splenic conventional type 2 dendritic cells. Positively regulates osteoblast differentiation by acting as an upstream activator of the JNK pathway. Promotes JNK signaling in hepatocytes and positively regulates hepatocyte lipid storage by inhibiting beta-oxidation and triacylglycerol secretion while enhancing lipid synthesis. Restricts age-associated inflammation by negatively regulating differentiation of macrophages and their production of pro-inflammatory cytokines. Plays a role in negatively regulating the abundance of regulatory T cells in white adipose tissue. The sequence is that of Serine/threonine-protein kinase TAO3 (Taok3) from Rattus norvegicus (Rat).